The sequence spans 239 residues: Ribose-5-phosphate isomerase A (239 aa).

Residues 40-43, 96-99, and 110-113 each bind substrate; these read SGST, DGAD, and KGGG. Glu119 serves as the catalytic Proton acceptor. Substrate is bound at residue Lys137.

The protein belongs to the ribose 5-phosphate isomerase family. In terms of assembly, homodimer.

The enzyme catalyses aldehydo-D-ribose 5-phosphate = D-ribulose 5-phosphate. Its pathway is carbohydrate degradation; pentose phosphate pathway; D-ribose 5-phosphate from D-ribulose 5-phosphate (non-oxidative stage): step 1/1. In terms of biological role, catalyzes the reversible conversion of ribose-5-phosphate to ribulose 5-phosphate. The sequence is that of Ribose-5-phosphate isomerase A from Methanococcus maripaludis (strain C7 / ATCC BAA-1331).